A 274-amino-acid chain; its full sequence is Large ribosomal subunit protein uL2 (274 aa).

The disordered stretch occupies residues 221–274; it reads RGTAMNPVDHPHGGGEGRNFGKHPVTPWGVQTKGKKTRSNKRTDKFIVRRRSKK.

It belongs to the universal ribosomal protein uL2 family. Part of the 50S ribosomal subunit. Forms a bridge to the 30S subunit in the 70S ribosome.

One of the primary rRNA binding proteins. Required for association of the 30S and 50S subunits to form the 70S ribosome, for tRNA binding and peptide bond formation. It has been suggested to have peptidyltransferase activity; this is somewhat controversial. Makes several contacts with the 16S rRNA in the 70S ribosome. The protein is Large ribosomal subunit protein uL2 of Yersinia enterocolitica.